Here is a 284-residue protein sequence, read N- to C-terminus: Bifunctional protein FolD (284 aa).

Residues 164-166 (GRS) and Ser189 each bind NADP(+).

This sequence belongs to the tetrahydrofolate dehydrogenase/cyclohydrolase family. As to quaternary structure, homodimer.

The enzyme catalyses (6R)-5,10-methylene-5,6,7,8-tetrahydrofolate + NADP(+) = (6R)-5,10-methenyltetrahydrofolate + NADPH. It carries out the reaction (6R)-5,10-methenyltetrahydrofolate + H2O = (6R)-10-formyltetrahydrofolate + H(+). It participates in one-carbon metabolism; tetrahydrofolate interconversion. In terms of biological role, catalyzes the oxidation of 5,10-methylenetetrahydrofolate to 5,10-methenyltetrahydrofolate and then the hydrolysis of 5,10-methenyltetrahydrofolate to 10-formyltetrahydrofolate. The sequence is that of Bifunctional protein FolD from Listeria monocytogenes serotype 4a (strain HCC23).